We begin with the raw amino-acid sequence, 210 residues long: MVADIKGNEQIEKYSWREACDTGSSRMDRKHGKYILNVEHSENQPPITHPNDQEAHSSICWCLPSNDITSDVSPNLTGVCVNPGILAHSRCLQSESCNTQVKEYCRNDWSMWKVFLACLLACVIMTAIGVLIICLVNNKGSANSSIVIQLSTNDGECVTVKPGTPSPACPPTMTTTSTVPASTATESTTSTATAATTSTEPITVAPTDHL.

Topologically, residues 1–113 (MVADIKGNEQ…YCRNDWSMWK (113 aa)) are cytoplasmic. The helical; Signal-anchor for type II membrane protein transmembrane segment at 114 to 134 (VFLACLLACVIMTAIGVLIIC) threads the bilayer. At 135 to 210 (LVNNKGSANS…PITVAPTDHL (76 aa)) the chain is on the extracellular side. Residues 168-210 (ACPPTMTTTSTVPASTATESTTSTATAATTSTEPITVAPTDHL) are disordered. Residues 171–203 (PTMTTTSTVPASTATESTTSTATAATTSTEPIT) are compositionally biased toward low complexity.

In terms of assembly, interacts with DCTN1 and DCTN2. In terms of tissue distribution, expressed in fibroblast and numerous cancer cell lines (at protein level).

The protein resides in the golgi apparatus membrane. It localises to the cell membrane. Plays a role in the regulation of cell proliferation. Promotes activation of the AKT1 signaling pathway. Promotes phosphorylation of AKT1 at 'Ser-473'. The protein is Dynactin-associated protein (DYNAP) of Homo sapiens (Human).